A 405-amino-acid chain; its full sequence is uncharacterized protein (405 aa).

Disordered stretches follow at residues 1–21, 150–179, and 285–405; these read MSKKVNKNASPKNNSDSESKT, IKDESDSDSDDEDTKKKKKNTKNKGKQEGP, and DDED…KSRS. Residues 7-16 show a composition bias toward polar residues; that stretch reads KNASPKNNSD. 2 stretches are compositionally biased toward acidic residues: residues 312-331 and 349-358; these read SDDEDSDNEKEKEKEEDDEE and DDEDDEEEGE. 2 stretches are compositionally biased toward basic residues: residues 365-374 and 390-405; these read SSKKSSKKAS and PKKKSSKAKSPSKSRS.

This is an uncharacterized protein from Acanthamoeba polyphaga (Amoeba).